The following is a 168-amino-acid chain: tRNA-splicing endonuclease subunit Sen15 (168 aa).

Residues 1-32 (MEERSDSEPTPGCSGPGPAPVRDGGGAHTWAP) are disordered. A phosphoserine mark is found at Ser-7 and Ser-165.

The protein belongs to the SEN15 family. As to quaternary structure, homodimer. tRNA splicing endonuclease is a heterotetramer composed of TSEN2, TSEN15, TSEN34/LENG5 and TSEN54. tRNA splicing endonuclease complex also contains proteins of the pre-mRNA 3' end processing machinery such as CLP1, CPSF1, CPSF4 and CSTF2.

The protein localises to the nucleus. It localises to the nucleolus. Its function is as follows. Non-catalytic subunit of the tRNA-splicing endonuclease complex, a complex responsible for identification and cleavage of the splice sites in pre-tRNA. It cleaves pre-tRNA at the 5' and 3' splice sites to release the intron. The products are an intron and two tRNA half-molecules bearing 2',3' cyclic phosphate and 5'-OH termini. There are no conserved sequences at the splice sites, but the intron is invariably located at the same site in the gene, placing the splice sites an invariant distance from the constant structural features of the tRNA body. The tRNA splicing endonuclease is also involved in mRNA processing via its association with pre-mRNA 3'-end processing factors, establishing a link between pre-tRNA splicing and pre-mRNA 3'-end formation, suggesting that the endonuclease subunits function in multiple RNA-processing events. In Mus musculus (Mouse), this protein is tRNA-splicing endonuclease subunit Sen15 (Tsen15).